Reading from the N-terminus, the 83-residue chain is U3-theraphotoxin-Cg1a (83 aa).

A signal peptide spans 1 to 23 (MRTFTLIAILTCAVLVIFHAAAA). Residues 24-44 (EELEAQDVIETEALATLDEER) constitute a propeptide that is removed on maturation. 3 cysteine pairs are disulfide-bonded: Cys-48/Cys-61, Cys-52/Cys-75, and Cys-69/Cys-80.

It belongs to the neurotoxin 12 (Hwtx-2) family. 03 (juruin) subfamily. Post-translationally, contains 3 disulfide bonds. Two different connectivities are observed in similar proteins (C1-C3, C2-C5, C4-C6 or C1-C4, C2-C5, C3-C6). Expressed by the venom gland.

Its subcellular location is the secreted. Probable ion channel inhibitor. This is U3-theraphotoxin-Cg1a from Chilobrachys guangxiensis (Chinese earth tiger tarantula).